The chain runs to 420 residues: Odorant receptor 63a (420 aa).

The Cytoplasmic segment spans residues 1-43 (MYSPEEAAELKRRNYRSIREMIRLSYTVGFNLLDPSRCGQVLR). Residues 44–64 (IWTIVLSVSSLASLYGHWQML) traverse the membrane as a helical segment. At 65-76 (ARYIHDIPRIGE) the chain is on the extracellular side. Residues 77 to 97 (TAGTALQFLTSIAKMWYFLFA) traverse the membrane as a helical segment. Residues 98–150 (HRQIYELLRKARCHELLQKCELFERMSDLPVIKEIRQQVESTMNRYWASTRRQ) lie on the Cytoplasmic side of the membrane. The chain crosses the membrane as a helical span at residues 151–171 (ILIYLYSCICITTNYFINSFV). At 172-217 (INLYRYFTKPKGSYDIMLPLPSLYPAWEHKGLEFPYYHIQMYLETC) the chain is on the extracellular side. The chain crosses the membrane as a helical span at residues 218 to 238 (SLYICGMCAVSFDGVFIVLCL). Topologically, residues 239–296 (HSVGLMRSLNQMVEQATSELVPPDRRVEYLRCCIYQYQRVANFATEVNNCFRHITFTQ) are cytoplasmic. A helical membrane pass occupies residues 297 to 317 (FLLSLFNWGLALFQMSVGLGN). Asparagine 318 carries an N-linked (GlcNAc...) asparagine glycan. Residues 318–320 (NSS) are Extracellular-facing. Residues 321–341 (ITMIRMTMYLVAAGYQIVVYC) form a helical membrane-spanning segment. Topologically, residues 342–387 (YNGQRFATASEEIANAFYQVRWYGESREFRHLIRMMLMRTNRGFRL) are cytoplasmic. Residues 388-408 (DVSWFMQMSLPTLMAMVRTSG) traverse the membrane as a helical segment. Topologically, residues 409 to 420 (QYFLLLQNVNQK) are extracellular.

It belongs to the insect chemoreceptor superfamily. Heteromeric odorant receptor channel (TC 1.A.69) family. Or63a subfamily. Interacts with Orco. Complexes exist early in the endomembrane system in olfactory sensory neurons (OSNs), coupling these complexes to the conserved ciliary trafficking pathway.

The protein resides in the cell membrane. Odorant receptor which mediates acceptance or avoidance behavior, depending on its substrates. The odorant receptor repertoire encodes a large collection of odor stimuli that vary widely in identity, intensity, and duration. May form a complex with Orco to form odorant-sensing units, providing sensitive and prolonged odorant signaling and calcium permeability. Involved in the behavioral responses to butyl acetate, isoamyl acetate, and hexanoic acid. This Drosophila melanogaster (Fruit fly) protein is Odorant receptor 63a (Or63a).